Consider the following 317-residue polypeptide: 2,3-dihydroxyphenylpropionate/2,3-dihydroxicinnamic acid 1,2-dioxygenase (317 aa).

The active-site Proton donor is the His115. The active-site Proton acceptor is His179.

The protein belongs to the LigB/MhpB extradiol dioxygenase family. In terms of assembly, homotetramer. Fe(2+) is required as a cofactor.

It catalyses the reaction 3-(2,3-dihydroxyphenyl)propanoate + O2 = (2Z,4E)-2-hydroxy-6-oxonona-2,4-dienedioate + H(+). The catalysed reaction is (2E)-3-(2,3-dihydroxyphenyl)prop-2-enoate + O2 = (2Z,4E,7E)-2-hydroxy-6-oxonona-2,4,7-trienedioate + H(+). It participates in aromatic compound metabolism; 3-phenylpropanoate degradation. Its function is as follows. Catalyzes the non-heme iron(II)-dependent oxidative cleavage of 2,3-dihydroxyphenylpropionic acid and 2,3-dihydroxicinnamic acid into 2-hydroxy-6-ketononadienedioate and 2-hydroxy-6-ketononatrienedioate, respectively. The polypeptide is 2,3-dihydroxyphenylpropionate/2,3-dihydroxicinnamic acid 1,2-dioxygenase (Burkholderia vietnamiensis (strain G4 / LMG 22486) (Burkholderia cepacia (strain R1808))).